The primary structure comprises 202 residues: MEVILLERVAKLGQMGDVVKVKHGFARNFLLKRGKALRATAENRTKYDGMKAELEINNIKAKGEAAKVAEKIDGRDIVIIRQASETGQLFGSVTVRDIVAALAEDGITVSRPQVWLDAPIKTIGQQKLTVAVHPEVEAHVMVTVARSADEAERIKRGEDISTRREDRDAAAEAIAAAGEFFDPEAEPDDVAEAGGEQTAEEK.

A disordered region spans residues 177 to 202 (AGEFFDPEAEPDDVAEAGGEQTAEEK). Residues 181–191 (FDPEAEPDDVA) are compositionally biased toward acidic residues.

The protein belongs to the bacterial ribosomal protein bL9 family.

Functionally, binds to the 23S rRNA. The protein is Large ribosomal subunit protein bL9 of Nitrobacter hamburgensis (strain DSM 10229 / NCIMB 13809 / X14).